The primary structure comprises 129 residues: LEM domain-containing protein 1 (129 aa).

Residues 1–45 enclose the LEM domain; that stretch reads MVDVKCLSDYELHKHLMKLGFTPGPILPSTRKTYEKKLVQLLASP. Positions 45 to 129 are disordered; that stretch reads PPWKPPVMKR…RAPRTTSHGA (85 aa). Basic and acidic residues predominate over residues 83 to 97; sequence SLKKTTLDATRDPRA.

In Mus musculus (Mouse), this protein is LEM domain-containing protein 1 (Lemd1).